Reading from the N-terminus, the 446-residue chain is Nuclear distribution protein PAC1-1 (446 aa).

Residues 9–41 (QAEELHKSLIAYLSSINASQSVTTLREELQIGD) form the LisH domain. A coiled-coil region spans residues 60-86 (ISVVRLQKRILDLESKIASLQAELDSA). WD repeat units lie at residues 112–153 (SHRG…RTLK), 155–195 (HTRT…ANIR), 199–239 (GHDH…CVKT), 242–281 (TQGD…ARAS), 284–344 (GHEN…IKTL), 346–385 (GHNN…KLVK), 390–430 (AHEH…TGFR), and 432–446 (VIAT…RVFM).

It belongs to the WD repeat LIS1/nudF family. Self-associates. Interacts with NDL1 and dynein.

Its subcellular location is the cytoplasm. It is found in the cytoskeleton. It localises to the spindle pole. Its function is as follows. Positively regulates the activity of the minus-end directed microtubule motor protein dynein. May enhance dynein-mediated microtubule sliding by targeting dynein to the microtubule plus end. Required for nuclear migration during vegetative growth as well as development. Required for retrograde early endosome (EE) transport from the hyphal tip. Required for localization of dynein to the mitotic spindle poles. Recruits additional proteins to the dynein complex at SPBs. In Uncinocarpus reesii (strain UAMH 1704), this protein is Nuclear distribution protein PAC1-1.